A 1706-amino-acid polypeptide reads, in one-letter code: MQQSHQAGYANAADRESGIPAAVLDGIKAVAKEKNATLMFRLVNPHSTSLIAEGVATKGLGVHAKSSDWGLQAGYIPVNPNLSKLFGRAPEVIARADNDVNSSLAHGHTAVDLTLSKERLDYLRQAGLVTGMADGVVASNHAGYEQFEFRVKETSDGRYAVQYRRKGGDDFEAVKVIGNAAGIPLTADIDMFAIMPHLSNFRDSARSSVTSGDSVTDYLARTRRAASEATGGLDRERIDLLWKIARAGARSAVGTEARRQFRYDGDMNIGVITDFELEVRNALNRRAHAVGAQDVVQHGTEQNNPFPEADEKIFVVSATGESQMLTRGQLKEYIGQQRGEGYVFYENRAYGVAGKSLFDDGLGAAPGVPSGRSKFSPDVLETVPASPGLRRPSLGAVERQDSGYDSLDGVGSRSFSLGEVSDMAAVEAAELEMTRQVLHAGARQDDAEPGVSGASAHWGQRALQGAQAVAAAQRLVHAIALMTQFGRAGSTNTPQEAASLSAAVFGLGEASSAVAETVSGFFRGSSRWAGGFGVAGGAMALGGGIAAAVGAGMSLTDDAPAGQKAAAGAEIALQLTGGTVELASSIALALAAARGVTSGLQVAGASAGAAAGALAAALSPMEIYGLVQQSHYADQLDKLAQESSAYGYEGDALLAQLYRDKTAAEGAVAGVSAVLSTVGAAVSIAAAASVVGAPVAVVTSLLTGALNGILRGVQQPIIEKLANDYARKIDELGGPQAYFEKNLQARHEQLANSDGLRKMLADLQAGWNASSVIGVQTTEISKSALELAAITGNADNLKSVDVFVDRFVQGERVAGQPVVLDVAAGGIDIASRKGERPALTFITPLAAPGEEQRRRTKTGKSEFTTFVEIVGKQDRWRIRDGAADTTIDLAKVVSQLVDANGVLKHSIKLDVIGGDGDDVVLANASRIHYDGGAGTNTVSYAALGRQDSITVSADGERFNVRKQLNNANVYREGVATQTTAYGKRTENVQYRHVELARVGQLVEVDTLEHVQHIIGGAGNDSITGNAHDNFLAGGSGDDRLDGGAGNDTLVGGEGQNTVIGGAGDDVFLQDLGVWSNQLDGGAGVDTVKYNVHQPSEERLERMGDTGIHADLQKGTVEKWPALNLFSVDHVKNIENLHGSRLNDRIAGDDQDNELWGHDGNDTIRGRGGDDILRGGLGLDTLYGEDGNDIFLQDDETVSDDIDGGAGLDTVDYSAMIHPGRIVAPHEYGFGIEADLSREWVRKASALGVDYYDNVRNVENVIGTSMKDVLIGDAQANTLMGQGGDDTVRGGDGDDLLFGGDGNDMLYGDAGNDTLYGGLGDDTLEGGAGNDWFGQTQAREHDVLRGGDGVDTVDYSQTGAHAGIAAGRIGLGILADLGAGRVDKLGEAGSSAYDTVSGIENVVGTELADRITGDAQANVLRGAGGADVLAGGEGDDVLLGGDGDDQLSGDAGRDRLYGEAGDDWFFQDAANAGNLLDGGDGRDTVDFSGPGRGLDAGAKGVFLSLGKGFASLMDEPETSNVLRNIENAVGSARDDVLIGDAGANVLNGLAGNDVLSGGAGDDVLLGDEGSDLLSGDAGNDDLFGGQGDDTYLFGVGYGHDTIYESGGGHDTIRINAGADQLWFARQGNDLEIRILGTDDALTVHDWYRDADHRVEIIHAANQAVDQAGIEKLVEAMAQYPDPGAAAAAPPAARVPDTLMQSLAVNWR.

The interval 1 to 399 (MQQSHQAGYA…RRPSLGAVER (399 aa)) is a, catalytic. An ATP-binding site is contributed by 349-356 (AYGVAGKS). The segment at 383-405 (VPASPGLRRPSLGAVERQDSGYD) is disordered. Positions 400 to 912 (QDSGYDSLDG…LKHSIKLDVI (513 aa)) are b, Ala/Gly-rich. Residues 500 to 698 (LSAAVFGLGE…SVVGAPVAVV (199 aa)) form a required for interaction with CyaC region. Residues Lys860 and Lys983 are each lipidated (N6-palmitoyl lysine). A c region spans residues 913-1656 (GGDGDDVVLA…RDADHRVEII (744 aa)). Hemolysin-type calcium-binding repeat units lie at residues 1014 to 1031 (IGGA…DNFL), 1032 to 1049 (AGGS…NDTL), 1050 to 1067 (VGGE…DDVF), 1155 to 1172 (WGHD…DDIL), 1173 to 1190 (RGGL…NDIF), 1279 to 1296 (MGQG…DDLL), 1297 to 1314 (FGGD…NDTL), 1315 to 1332 (YGGL…NDWF), 1335 to 1352 (TQAR…VDTV), 1411 to 1428 (TGDA…ADVL), 1429 to 1446 (AGGE…DDQL), 1447 to 1464 (SGDA…DDWF), 1468 to 1484 (AANA…RDTV), 1537 to 1554 (IGDA…NDVL), 1555 to 1572 (SGGA…SDLL), 1573 to 1590 (SGDA…DDTY), and 1603 to 1620 (ESGG…ADQL). Residues 1657–1706 (HAANQAVDQAGIEKLVEAMAQYPDPGAAAAAPPAARVPDTLMQSLAVNWR) form a d, Asp/Gly-rich region.

In the N-terminal section; belongs to the adenylyl cyclase class-2 family. This sequence in the C-terminal section; belongs to the RTX prokaryotic toxin family. Released in a processed form. In terms of processing, palmitoylated at Lys-860 and Lys-983 by CyaC. The toxin only becomes active when modified in position Lys-983: palmitoylation is required for efficient membrane insertion and pore formation of the acylated Hemolysin chain.

The protein resides in the secreted. Its subcellular location is the host cell membrane. The catalysed reaction is ATP = 3',5'-cyclic AMP + diphosphate. With respect to regulation, activated by host calmodulin. Bifunctional adenylate cyclase toxin-hemolysin that plays a crucial role in host colonization. It causes whooping cough by acting on mammalian cells by elevating cAMP-concentration and thus disrupts normal cell function. Its function is as follows. Adenylate cyclase that is activated by host intracellular calmodulin and catalyzes un-regulated conversion of ATP to cAMP, thereby impairing microbicidal functions of immune effector cells and inducing apoptosis of lung macrophages. In terms of biological role, hemolysin that forms small cation-selective membrane channels, leading to hemolytic activity. The hemolytic activity of CyaA is weak compared with that of the HlyA of E.coli. The chain is Bifunctional hemolysin/adenylate cyclase (cya) from Bordetella pertussis (strain Tohama I / ATCC BAA-589 / NCTC 13251).